A 777-amino-acid chain; its full sequence is Penicillin-binding protein 1B (777 aa).

The Cytoplasmic segment spans residues 1–30 (MTRKSSNRSRGRKARSGKSASSSKLQIWLG). A helical; Signal-anchor for type II membrane protein transmembrane segment spans residues 31–52 (RIWSIGWKLALTLAAVLVFIGI). The Periplasmic segment spans residues 53–777 (YLDSMIKQRF…TEWIKKLFEW (725 aa)). Positions 162 to 334 (LRLEPKLMGM…SYYNPMRYAE (173 aa)) are transglycosylase. E200 functions as the Proton donor; for transglycosylase activity in the catalytic mechanism. The segment at 415–709 (SKLEQAIHDQ…ASGALRVYAQ (295 aa)) is transpeptidase. S476 acts as the Acyl-ester intermediate; for transpeptidase activity in catalysis.

This sequence in the N-terminal section; belongs to the glycosyltransferase 51 family. In the C-terminal section; belongs to the transpeptidase family.

Its subcellular location is the cell inner membrane. The enzyme catalyses [GlcNAc-(1-&gt;4)-Mur2Ac(oyl-L-Ala-gamma-D-Glu-L-Lys-D-Ala-D-Ala)](n)-di-trans,octa-cis-undecaprenyl diphosphate + beta-D-GlcNAc-(1-&gt;4)-Mur2Ac(oyl-L-Ala-gamma-D-Glu-L-Lys-D-Ala-D-Ala)-di-trans,octa-cis-undecaprenyl diphosphate = [GlcNAc-(1-&gt;4)-Mur2Ac(oyl-L-Ala-gamma-D-Glu-L-Lys-D-Ala-D-Ala)](n+1)-di-trans,octa-cis-undecaprenyl diphosphate + di-trans,octa-cis-undecaprenyl diphosphate + H(+). It carries out the reaction Preferential cleavage: (Ac)2-L-Lys-D-Ala-|-D-Ala. Also transpeptidation of peptidyl-alanyl moieties that are N-acyl substituents of D-alanine.. It functions in the pathway cell wall biogenesis; peptidoglycan biosynthesis. Cell wall formation. Synthesis of cross-linked peptidoglycan from the lipid intermediates. The enzyme has a penicillin-insensitive transglycosylase N-terminal domain (formation of linear glycan strands) and a penicillin-sensitive transpeptidase C-terminal domain (cross-linking of the peptide subunits). This Vibrio cholerae serotype O1 (strain ATCC 39315 / El Tor Inaba N16961) protein is Penicillin-binding protein 1B (mrcB).